The following is a 552-amino-acid chain: Putative transport protein Spro_0050 (552 aa).

Helical transmembrane passes span 4–24 (IALT…MGNW), 26–46 (IYGV…VGHF), 65–85 (FGLI…FFSS), 96–116 (FAIL…KLFA), 117–137 (VPLP…PALG), and 158–178 (MGYA…MWLI). RCK C-terminal domains are found at residues 192 to 276 (AFAS…VIGE) and 279 to 361 (DVSL…IVGN). 6 helical membrane-spanning segments follow: residues 371 to 391 (MLPV…PLFI), 393 to 413 (GFPA…ALIL), 439 to 459 (IVLF…DTLI), 464 to 484 (LAWI…VGVL), 493 to 513 (YLTL…LAFA), and 530 to 550 (VYPL…VLFW).

This sequence belongs to the AAE transporter (TC 2.A.81) family. YidE subfamily.

It localises to the cell membrane. This chain is Putative transport protein Spro_0050, found in Serratia proteamaculans (strain 568).